The primary structure comprises 207 residues: Calcipressin-like protein (207 aa).

The interval 176-181 is required for tax-6 interaction; sequence PAIIVH.

Belongs to the RCAN family. In terms of assembly, interacts with tax-6 (via catalytic domain); the interaction is calcium-dependent. As to expression, expressed in lateral hypodermal cells, marginal cells of the pharynx, vulva epithelial cells, ventral and dorsal nerve cords and commissures and various neurons in the anterior and posterior regions. Expressed in male tail structures including the diagonal muscles, sensory rays and spicules. Expressed in PHC neurons and most tail neurons and support cells of the phasmid neurons. Also expressed in pharyngeal muscle, head neurons, excretory canal cells and hypodermal seam cells.

In terms of biological role, inhibits tax-6/calcineurin A phosphatase activity and thereby negatively regulates calcineurin-mediated functions. Plays a role in modulating temperature-dependent calcium responses in AFD neurons and in addition, also negatively regulates thermotaxis in a tax-6-dependent manner in AFD neurons. In response to changes in intracellular calcium levels may also regulate nuclear translocation of transcriptional regulators such as crtc-1. May play a role in regulating body size. Plays a role in male tail tip morphogenesis. This chain is Calcipressin-like protein, found in Caenorhabditis elegans.